Reading from the N-terminus, the 483-residue chain is Serine hydroxymethyltransferase, cytosolic (483 aa).

Position 257 is an N6-(pyridoxal phosphate)lysine (Lys257).

The protein belongs to the SHMT family. Homotetramer. Identified in complex with ABRAXAS2 and the other subunits of the BRISC complex, at least composed of ABRAXAS2, BRCC3/BRCC36, BABAM2 and BABAM1/NBA1. The cofactor is pyridoxal 5'-phosphate.

The protein resides in the cytoplasm. It carries out the reaction (6R)-5,10-methylene-5,6,7,8-tetrahydrofolate + glycine + H2O = (6S)-5,6,7,8-tetrahydrofolate + L-serine. Its pathway is one-carbon metabolism; tetrahydrofolate interconversion. Functionally, interconversion of serine and glycine. The polypeptide is Serine hydroxymethyltransferase, cytosolic (SHMT1) (Pongo abelii (Sumatran orangutan)).